We begin with the raw amino-acid sequence, 248 residues long: NAD kinase (248 aa).

Residue Asp-45 is the Proton acceptor of the active site. NAD(+)-binding positions include 45-46, Arg-50, 110-111, and Asp-138; these read DG and NE.

The protein belongs to the NAD kinase family. A divalent metal cation serves as cofactor.

Its subcellular location is the cytoplasm. The catalysed reaction is NAD(+) + ATP = ADP + NADP(+) + H(+). Functionally, involved in the regulation of the intracellular balance of NAD and NADP, and is a key enzyme in the biosynthesis of NADP. Catalyzes specifically the phosphorylation on 2'-hydroxyl of the adenosine moiety of NAD to yield NADP. The polypeptide is NAD kinase (Sulfurisphaera tokodaii (strain DSM 16993 / JCM 10545 / NBRC 100140 / 7) (Sulfolobus tokodaii)).